Reading from the N-terminus, the 644-residue chain is Archaeal Lon protease (644 aa).

The segment covering 1 to 18 has biased composition (polar residues); that stretch reads MKTTIKNSRTQESVSYEG. A disordered region spans residues 1–30; that stretch reads MKTTIKNSRTQESVSYEGNETKKGTGETLS. At 1-137 the chain is on the cytoplasmic side; the sequence is MKTTIKNSRT…KARSQDEKKN (137 aa). ATP is bound at residue 71–78; that stretch reads GEPGVGKS. The next 2 membrane-spanning stretches (helical) occupy residues 138-155 and 156-171; these read LFMM…FMMN and QFLA…FLAL. Over 172 to 644 the chain is Cytoplasmic; that stretch reads QQFRPRTTVM…PSIMKKPAMH (473 aa). The 180-residue stretch at 438–617 folds into the Lon proteolytic domain; it reads GGEVGRVNGL…GDVLEHALIG (180 aa). Catalysis depends on residues S524 and K567.

The protein belongs to the peptidase S16 family. Archaeal LonB subfamily. In terms of assembly, homohexamer. Organized in a ring with a central cavity.

The protein resides in the cell membrane. In terms of biological role, ATP-dependent serine protease that mediates the selective degradation of mutant and abnormal proteins as well as certain short-lived regulatory proteins. Degrades polypeptides processively. This is Archaeal Lon protease from Methanothermobacter thermautotrophicus (strain ATCC 29096 / DSM 1053 / JCM 10044 / NBRC 100330 / Delta H) (Methanobacterium thermoautotrophicum).